We begin with the raw amino-acid sequence, 289 residues long: Ketose 3-epimerase (289 aa).

Glu-146 (proton donor/acceptor) is an active-site residue. Residue Glu-146 coordinates Mn(2+). Substrate contacts are provided by residues Glu-152 and 179 to 182 (DTYH). Mn(2+) contacts are provided by Asp-179 and His-205. Arg-211 contributes to the substrate binding site. The active-site Proton donor/acceptor is the Glu-240. Residue Glu-240 coordinates Mn(2+).

Belongs to the hyi family. As to quaternary structure, homotetramer. The cofactor is Mg(2+). It depends on Mn(2+) as a cofactor. Co(2+) is required as a cofactor.

It carries out the reaction L-ribulose = L-xylulose. The enzyme catalyses D-allulose = keto-D-fructose. The catalysed reaction is keto-L-tagatose = keto-L-sorbose. It catalyses the reaction D-ribulose = D-xylulose. It carries out the reaction L-allulose = keto-L-fructose. The enzyme catalyses keto-D-tagatose = keto-D-sorbose. In terms of biological role, catalyzes the reversible C-3 epimerization of several ketoses. Shows the highest enzymatic activity for the epimerization of L-ribulose to L-xylulose. Is also able to convert D-allulose (also known as D-psicose) to D-fructose and, to a lesser extent, L-tagatose to L-sorbose, D-ribulose to D-xylulose, L-allulose to L-fructose and D-tagatose to D-sorbose. The polypeptide is Ketose 3-epimerase (Arthrobacter globiformis).